We begin with the raw amino-acid sequence, 286 residues long: Bifunctional protein FolD (286 aa).

NADP(+) contacts are provided by residues 165 to 167 and Ser-190; that span reads GRS.

This sequence belongs to the tetrahydrofolate dehydrogenase/cyclohydrolase family. In terms of assembly, homodimer.

The catalysed reaction is (6R)-5,10-methylene-5,6,7,8-tetrahydrofolate + NADP(+) = (6R)-5,10-methenyltetrahydrofolate + NADPH. It carries out the reaction (6R)-5,10-methenyltetrahydrofolate + H2O = (6R)-10-formyltetrahydrofolate + H(+). It participates in one-carbon metabolism; tetrahydrofolate interconversion. In terms of biological role, catalyzes the oxidation of 5,10-methylenetetrahydrofolate to 5,10-methenyltetrahydrofolate and then the hydrolysis of 5,10-methenyltetrahydrofolate to 10-formyltetrahydrofolate. In Staphylococcus aureus (strain MRSA252), this protein is Bifunctional protein FolD.